The sequence spans 644 residues: MEIPAPEPEKTALSSQDPALSLKENLEDISGWGLPEARSKESVSFKDVAVDFTQEEWGQLDSPQRALYRDVMLENYQNLLALGPPLHKPDVISHLERGEEPWSMQREVPRGPCPEWELKAVPSQQQGICKEEPAQEPIMERPLGGAQAWGRQAGALQRSQAAPWAPAPAMVWDVPVEEFPLRCPLFAQQRVPEGGPLLDTRKNVQATEGRTKAPARLCAGENASTPSEPEKFPQVRRQRGAGAGEGEFVCGECGKAFRQSSSLTLHRRWHSREKAYKCDECGKAFTWSTNLLEHRRIHTGEKPFFCGECGKAFSCHSSLNVHQRIHTGERPYKCSACEKAFSCSSLLSMHLRVHTGEKPYRCGECGKAFNQRTHLTRHHRIHTGEKPYQCGSCGKAFTCHSSLTVHEKIHSGDKPFKCSDCEKAFNSRSRLTLHQRTHTGEKPFKCADCGKGFSCHAYLLVHRRIHSGEKPFKCNECGKAFSSHAYLIVHRRIHTGEKPFDCSQCWKAFSCHSSLIVHQRIHTGEKPYKCSECGRAFSQNHCLIKHQKIHSGEKSFKCEKCGEMFNWSSHLTEHQRLHSEGKPLAIQFNKHLLSTYYVPGSLLGAGDAGLRDVDPIDALDVAKLLCVVPPRAGRNFSLGSKPRN.

One can recognise a KRAB domain in the interval 43-114; that stretch reads VSFKDVAVDF…QREVPRGPCP (72 aa). C2H2-type zinc fingers lie at residues 248–270, 276–298, 304–326, 332–354, 360–382, 388–410, 416–438, 444–466, 472–494, 500–522, 528–550, and 556–578; these read FVCGECGKAFRQSSSLTLHRRWH, YKCDECGKAFTWSTNLLEHRRIH, FFCGECGKAFSCHSSLNVHQRIH, YKCSACEKAFSCSSLLSMHLRVH, YRCGECGKAFNQRTHLTRHHRIH, YQCGSCGKAFTCHSSLTVHEKIH, FKCSDCEKAFNSRSRLTLHQRTH, FKCADCGKGFSCHAYLLVHRRIH, FKCNECGKAFSSHAYLIVHRRIH, FDCSQCWKAFSCHSSLIVHQRIH, YKCSECGRAFSQNHCLIKHQKIH, and FKCEKCGEMFNWSSHLTEHQRLH. Lys-582 is covalently cross-linked (Glycyl lysine isopeptide (Lys-Gly) (interchain with G-Cter in SUMO2)).

This sequence belongs to the krueppel C2H2-type zinc-finger protein family. As to expression, highly expressed in the fetal brain.

It is found in the nucleus. In terms of biological role, may play a role in RNA metabolism. The sequence is that of Zinc finger protein 74 (ZNF74) from Homo sapiens (Human).